The primary structure comprises 192 residues: 7-methyl-GTP pyrophosphatase (192 aa).

Asp69 acts as the Proton acceptor in catalysis.

This sequence belongs to the Maf family. YceF subfamily. It depends on a divalent metal cation as a cofactor.

It is found in the cytoplasm. It catalyses the reaction N(7)-methyl-GTP + H2O = N(7)-methyl-GMP + diphosphate + H(+). Nucleoside triphosphate pyrophosphatase that hydrolyzes 7-methyl-GTP (m(7)GTP). May have a dual role in cell division arrest and in preventing the incorporation of modified nucleotides into cellular nucleic acids. This Methylobacillus flagellatus (strain ATCC 51484 / DSM 6875 / VKM B-1610 / KT) protein is 7-methyl-GTP pyrophosphatase.